Consider the following 233-residue polypeptide: uncharacterized protein (233 aa).

Transmembrane regions (helical) follow at residues 7–27 (VPIFIAILSFIVMCIGELLAY), 36–56 (YEFEAISFGFIFGVATLILIP), 62–82 (MFVLYVILGMITVYLIEKYLA), 119–139 (LIIAVSYISEIGLPLYLAILM), 159–179 (PLYPGVFVSFGTVLGTIVGLV), and 188–208 (ILLAFSGGVFLGAFLMLAPHI).

The protein resides in the cell membrane. This is an uncharacterized protein from Methanocaldococcus jannaschii (strain ATCC 43067 / DSM 2661 / JAL-1 / JCM 10045 / NBRC 100440) (Methanococcus jannaschii).